A 175-amino-acid chain; its full sequence is Co-chaperone protein daf-41 (175 aa).

The region spanning 2–89 (AKQPTVLWAQ…KTPAWWPRLL (88 aa)) is the CS domain. The interval 109-175 (DEDDEAEDAG…EEEGKNGTRA (67 aa)) is disordered. Residues 148-168 (GLEDDEEDDDMPDLEDNEEEE) are compositionally biased toward acidic residues.

The protein belongs to the p23/wos2 family. As to expression, expressed in anterior and posterior neurons including ASE, AWC, ASI and ADL amphids and phasmid sensory neurons, peripheral neurons and ventral cord motorneurons. Additionally expressed in body wall muscle, pharynx, vulva, germ cells and intestine.

In terms of biological role, co-chaperone for hsp90/daf-21. Involved in regulation of longevity, larval entry and exit from the dauer stage of development and response to environmental cues, such as oxidative stress, in a temperature-dependent manner. Role in daf-16 and hsf-1 inhibition at elevated temperatures. This Caenorhabditis elegans protein is Co-chaperone protein daf-41.